The chain runs to 399 residues: Serpin-Z1B (399 aa).

Residues 344 to 368 (GTEAAASTAIKMVPQQARPPSVMDF) form an RCL region.

It belongs to the serpin family.

Inhibits chymotrypsin and cathepsin G in vitro. This is Serpin-Z1B from Triticum aestivum (Wheat).